The primary structure comprises 52 residues: Venom peptide 4a (52 aa).

A signal peptide spans 1–23 (MRSAILLVIVAIVAILGFLGVNA). AXPX repeat units lie at residues 23–26 (AEPL), 31–34 (AEPN), and 39–42 (AAPL). Positions 24–41 (EPLPSPLAEPNPHAKAAP) are excised as a propeptide. A51 bears the Alanine amide mark.

Expressed by the venom gland.

It is found in the secreted. This Eumenes pomiformis (Potter wasp) protein is Venom peptide 4a.